The chain runs to 137 residues: Holo-[acyl-carrier-protein] synthase (137 aa).

Residues Asp-8 and Glu-61 each contribute to the Mg(2+) site.

This sequence belongs to the P-Pant transferase superfamily. AcpS family. Requires Mg(2+) as cofactor.

It localises to the cytoplasm. It carries out the reaction apo-[ACP] + CoA = holo-[ACP] + adenosine 3',5'-bisphosphate + H(+). In terms of biological role, transfers the 4'-phosphopantetheine moiety from coenzyme A to a Ser of acyl-carrier-protein. The sequence is that of Holo-[acyl-carrier-protein] synthase from Afipia carboxidovorans (strain ATCC 49405 / DSM 1227 / KCTC 32145 / OM5) (Oligotropha carboxidovorans).